Consider the following 152-residue polypeptide: Large ribosomal subunit protein bL9 (152 aa).

It belongs to the bacterial ribosomal protein bL9 family.

Binds to the 23S rRNA. The chain is Large ribosomal subunit protein bL9 from Synechococcus sp. (strain RCC307).